We begin with the raw amino-acid sequence, 384 residues long: 8-amino-7-oxononanoate synthase (384 aa).

Substrate is bound at residue Arg21. A pyridoxal 5'-phosphate-binding site is contributed by 108-109 (GF). His133 lines the substrate pocket. Residues Ser179, His207, and Thr233 each contribute to the pyridoxal 5'-phosphate site. Lys236 carries the post-translational modification N6-(pyridoxal phosphate)lysine. Position 352 (Thr352) interacts with substrate.

The protein belongs to the class-II pyridoxal-phosphate-dependent aminotransferase family. BioF subfamily. In terms of assembly, homodimer. Requires pyridoxal 5'-phosphate as cofactor.

It catalyses the reaction 6-carboxyhexanoyl-[ACP] + L-alanine + H(+) = (8S)-8-amino-7-oxononanoate + holo-[ACP] + CO2. It participates in cofactor biosynthesis; biotin biosynthesis. In terms of biological role, catalyzes the decarboxylative condensation of pimeloyl-[acyl-carrier protein] and L-alanine to produce 8-amino-7-oxononanoate (AON), [acyl-carrier protein], and carbon dioxide. The chain is 8-amino-7-oxononanoate synthase from Shigella dysenteriae serotype 1 (strain Sd197).